A 117-amino-acid polypeptide reads, in one-letter code: Large ribosomal subunit protein bL20 (117 aa).

Belongs to the bacterial ribosomal protein bL20 family.

Functionally, binds directly to 23S ribosomal RNA and is necessary for the in vitro assembly process of the 50S ribosomal subunit. It is not involved in the protein synthesizing functions of that subunit. In Helicobacter hepaticus (strain ATCC 51449 / 3B1), this protein is Large ribosomal subunit protein bL20.